Here is a 798-residue protein sequence, read N- to C-terminus: Shutoff protein (798 aa).

Positions 1 to 14 (MESTADGDKARGEE) are enriched in basic and acidic residues. Residues 1–123 (MESTADGDKA…SHSSDSELGC (123 aa)) form a disordered region. Over residues 33–49 (APEDEHPDDGEPDEPAD) the composition is skewed to acidic residues. The span at 68–80 (GGRDAECDGEAAR) shows a compositional bias: basic and acidic residues. A compositionally biased stretch (polar residues) spans 86–105 (DESSAPTTPSTAVRRSSGES). Residues 309–376 (LMEVLLQPFA…GRPLYRSARA (68 aa)) form a binding to host EIF4G region. The region spanning 379-497 (SVFREPSSIK…AIYALETPTE (119 aa)) is the RRM domain. Position 711 is a phosphotyrosine; by host (tyrosine 711). The tract at residues 740–798 (YADHARGAATSAEPSRALRPTSVATAAGNRTRGCSSARYRLGPTLRRRSNSSWPREWST) is disordered. Residues 789–798 (NSSWPREWST) show a composition bias toward polar residues.

This sequence belongs to the adenoviridae shutoff protein family. As to quaternary structure, monomer. Interacts with hexon protein; this interaction allows chaperoning and trimerization of hexon proteins. Interacts (via N-terminus) with host initiation factor EIF4G (via C-terminus). Interacts (via RRM domain) with viral mRNAs that contain the tripartite leader; this interaction allows ribosome shunting and expression of viral late mRNAs. In terms of processing, might be cleaved by the viral protease. Post-translationally, phosphorylated. Tyrosine phosphorylation enhances preferential binding to tripartite leader mRNAs and allows ribosome shunting. Methylated. Asymmetric dimethylation by host PRMT1 of the Arg/Gly-rich region may regulate shutoff protein binding to hexon and promote the capsid assembly in the nucleus.

The protein localises to the host cytoplasm. In terms of biological role, protein that inhibits host translation while promoting late viral translation by ribosome shunting. Blocks host cap-dependent translation by binding to eIF4G, displacing MKNK1 from cap initiation complexes and preventing EIF4E phosphorylation. Binds to the tripartite leader sequence of viral late mRNAs and recruits host eIF4G, PABPC1/poly-A binding protein and 40S ribosomes subunits on viral mRNAs, allowing ribosome shunting and efficient translation of late viral mRNAs even though conventional translation via ribosome scanning from the cap has been shut off in the host cell. During assembly, acts as a chaperone protein that helps hexon proteins assembly into trimers. This chain is Shutoff protein, found in Galliformes (FAdV-10).